Reading from the N-terminus, the 312-residue chain is 6-hydroxy-3-succinoylpyridine 3-monooxygenase HspA (312 aa).

The NYN domain occupies 14–210 (IYIDGYNFYY…RSANTDLIKF (197 aa)).

The catalysed reaction is 4-(6-hydroxypyridin-3-yl)-4-oxobutanoate + 2 NADH + O2 + 2 H(+) = 2,5-dihydroxypyridine + succinate semialdehyde + 2 NAD(+) + H2O. Its pathway is alkaloid degradation; nicotine degradation. Involved in the nicotine degradation. Catalyzes the cleavage of 6-hydroxy-3-succinoylpyridine (HSP) by incorporation of oxygen at the 3-position to produce to 2,5-dihydroxypyridine (DHP) and succinic semialdehyde. The polypeptide is 6-hydroxy-3-succinoylpyridine 3-monooxygenase HspA (Pseudomonas putida (strain DSM 28022 / S16)).